A 424-amino-acid chain; its full sequence is Folate-like transporter 3 (424 aa).

N-linked (GlcNAc...) asparagine glycosylation occurs at N35. Transmembrane regions (helical) follow at residues 55 to 75 (VALI…ILII), 78 to 98 (LSYF…CMQL), 101 to 119 (LFYG…YIYV), 136 to 156 (ALLV…GLNW), and 164 to 184 (IINL…PHVP). N254 is a glycosylation site (N-linked (GlcNAc...) asparagine). Transmembrane regions (helical) follow at residues 313-333 (GLLF…CYII), 361-381 (LFGI…AIVI), and 392-412 (FVVY…IFGI).

The protein belongs to the reduced folate carrier (RFC) transporter (TC 2.A.48) family.

Its subcellular location is the membrane. In Caenorhabditis elegans, this protein is Folate-like transporter 3 (folt-3).